The primary structure comprises 437 residues: Type II methyltransferase M.HgiBI (437 aa).

The 428-residue stretch at 4-431 (FRFIDLFAGI…KALQCVKLFE (428 aa)) folds into the SAM-dependent MTase C5-type domain. Cysteine 75 is an active-site residue.

This sequence belongs to the class I-like SAM-binding methyltransferase superfamily. C5-methyltransferase family.

The catalysed reaction is a 2'-deoxycytidine in DNA + S-adenosyl-L-methionine = a 5-methyl-2'-deoxycytidine in DNA + S-adenosyl-L-homocysteine + H(+). Its function is as follows. A methylase that recognizes the double-stranded sequence 5'-GGWCC-3', methylates C-? on both strands, and protects the DNA from cleavage by the HgiBI endonuclease. This system is less active than isoschizomeric RM.HgiEI. This Herpetosiphon aurantiacus (Herpetosiphon giganteus) protein is Type II methyltransferase M.HgiBI.